The following is a 798-amino-acid chain: Ubiquitin carboxyl-terminal hydrolase 10 (798 aa).

Ala-2 carries the post-translational modification N-acetylalanine. An interaction with p53/TP53 region spans residues 2 to 100; sequence ALHSPQYIFG…ILGCTASKIT (99 aa). The tract at residues 6 to 21 is G3BP1-binding; the sequence is PQYIFGDFSPDEFNQF. Position 24 is a phosphothreonine (Thr-24). Residue Thr-42 is modified to Phosphothreonine; by ATM. Thr-100 is modified (phosphothreonine). Disordered stretches follow at residues 139 to 166, 194 to 257, and 307 to 337; these read GVSG…LKDG, AEFM…CFPA, and TESI…LPVS. Residues 205 to 219 are compositionally biased toward polar residues; it reads TPRTCNSPQNSTDSV. Phosphoserine is present on residues Ser-211 and Ser-226. Basic and acidic residues predominate over residues 307 to 316; it reads TESIDLDPTK. Ser-321 carries the phosphoserine modification. Polar residues predominate over residues 328 to 337; the sequence is GSASGTLPVS. Ser-337 is modified (phosphoserine; by ATM). Residues Ser-365 and Ser-370 each carry the phosphoserine modification. The USP domain occupies 415–795; it reads RGLINKGNWC…TAYLLYYRRV (381 aa). Cys-424 functions as the Nucleophile in the catalytic mechanism. Ser-547 is subject to Phosphoserine. Residues 551 to 562 show a composition bias toward polar residues; the sequence is EKLTISNGPKNH. The interval 551–594 is disordered; that stretch reads EKLTISNGPKNHSVNEEEQEEQGEGSEDEWEQVGPRNKTSVTRQ. Phosphoserine is present on residues Ser-563 and Ser-576. The segment covering 566 to 581 has biased composition (acidic residues); it reads EEEQEEQGEGSEDEWE. His-749 functions as the Proton acceptor in the catalytic mechanism.

It belongs to the peptidase C19 family. USP10 subfamily. As to quaternary structure, found in a deubiquitination complex with TANK, USP10 and ZC3H12A; this complex inhibits genotoxic stress- or interleukin-1-beta (IL1B)-mediated NF-kappa-B activation by promoting IKBKG or TRAF6 deubiquitination. Interacts with IKBKG; this interaction increases in response to DNA damage. Interacts with TANK; this interaction increases in response to DNA damage. Interacts with TRAF6; this interaction increases in response to DNA damage. Interacts with ZC3H12A; this interaction increases in response to DNA damage. Interacts with G3BP1 (via NTF2 domain) and G3BP2 (via NTF2 domain); inhibiting stress granule formation. Post-translationally, phosphorylated by ATM following DNA damage, leading to stabilization and translocation it to the nucleus. In terms of processing, ubiquitinated. Deubiquitinated by USP13. As to expression, widely expressed.

It is found in the cytoplasm. It localises to the nucleus. Its subcellular location is the early endosome. The catalysed reaction is Thiol-dependent hydrolysis of ester, thioester, amide, peptide and isopeptide bonds formed by the C-terminal Gly of ubiquitin (a 76-residue protein attached to proteins as an intracellular targeting signal).. Specifically inhibited by spautin-1 (specific and potent autophagy inhibitor-1), a derivative of MBCQ that binds to USP10 and inhibits deubiquitinase activity. Regulated by PIK3C3/VPS34-containing complexes. In terms of biological role, hydrolase that can remove conjugated ubiquitin from target proteins such as p53/TP53, RPS2/us5, RPS3/us3, RPS10/eS10, BECN1, SNX3 and CFTR. Acts as an essential regulator of p53/TP53 stability: in unstressed cells, specifically deubiquitinates p53/TP53 in the cytoplasm, leading to counteract MDM2 action and stabilize p53/TP53. Following DNA damage, translocates to the nucleus and deubiquitinates p53/TP53, leading to regulate the p53/TP53-dependent DNA damage response. Component of a regulatory loop that controls autophagy and p53/TP53 levels: mediates deubiquitination of BECN1, a key regulator of autophagy, leading to stabilize the PIK3C3/VPS34-containing complexes. In turn, PIK3C3/VPS34-containing complexes regulate USP10 stability, suggesting the existence of a regulatory system by which PIK3C3/VPS34-containing complexes regulate p53/TP53 protein levels via USP10 and USP13. Does not deubiquitinate MDM2. Plays a key role in 40S ribosome subunit recycling when a ribosome has stalled during translation: acts both by inhibiting formation of stress granules, which store stalled translation pre-initiation complexes, and mediating deubiquitination of 40S ribosome subunits. Acts as a negative regulator of stress granules formation by lowering G3BP1 and G3BP2 valence, thereby preventing G3BP1 and G3BP2 ability to undergo liquid-liquid phase separation (LLPS) and assembly of stress granules. Promotes 40S ribosome subunit recycling following ribosome dissociation in response to ribosome stalling by mediating deubiquitination of 40S ribosomal proteins RPS2/us5, RPS3/us3 and RPS10/eS10, thereby preventing their degradation by the proteasome. Part of a ribosome quality control that takes place when ribosomes have stalled during translation initiation (iRQC): USP10 acts by removing monoubiquitination of RPS2/us5 and RPS3/us3, promoting 40S ribosomal subunit recycling. Deubiquitinates CFTR in early endosomes, enhancing its endocytic recycling. Involved in a TANK-dependent negative feedback response to attenuate NF-kappa-B activation via deubiquitinating IKBKG or TRAF6 in response to interleukin-1-beta (IL1B) stimulation or upon DNA damage. Deubiquitinates TBX21 leading to its stabilization. Plays a negative role in the RLR signaling pathway upon RNA virus infection by blocking the RIGI-mediated MAVS activation. Mechanistically, removes the unanchored 'Lys-63'-linked polyubiquitin chains of MAVS to inhibit its aggregation, essential for its activation. This Homo sapiens (Human) protein is Ubiquitin carboxyl-terminal hydrolase 10.